Reading from the N-terminus, the 222-residue chain is Deoxyribose-phosphate aldolase (222 aa).

Residue aspartate 90 is the Proton donor/acceptor of the active site. The Schiff-base intermediate with acetaldehyde role is filled by lysine 152. Lysine 181 functions as the Proton donor/acceptor in the catalytic mechanism.

Belongs to the DeoC/FbaB aldolase family. DeoC type 1 subfamily.

It localises to the cytoplasm. The enzyme catalyses 2-deoxy-D-ribose 5-phosphate = D-glyceraldehyde 3-phosphate + acetaldehyde. It functions in the pathway carbohydrate degradation; 2-deoxy-D-ribose 1-phosphate degradation; D-glyceraldehyde 3-phosphate and acetaldehyde from 2-deoxy-alpha-D-ribose 1-phosphate: step 2/2. Functionally, catalyzes a reversible aldol reaction between acetaldehyde and D-glyceraldehyde 3-phosphate to generate 2-deoxy-D-ribose 5-phosphate. The protein is Deoxyribose-phosphate aldolase of Pectobacterium atrosepticum (strain SCRI 1043 / ATCC BAA-672) (Erwinia carotovora subsp. atroseptica).